A 259-amino-acid polypeptide reads, in one-letter code: Ras-related protein Rab-34 (259 aa).

The residue at position 1 (M1) is an N-acetylmethionine. 8 residues coordinate GTP: S62, V63, G64, K65, T66, D78, Y81, and T84. Residue T66 participates in Mg(2+) binding. The Switch 1 motif lies at R71–F89. The Mg(2+) site is built by T84 and D107. The Switch 2 motif lies at T108–A127. GTP-binding residues include G110, K167, D169, and S198. Residues S241 and S244 each carry the phosphoserine modification. 2 S-geranylgeranyl cysteine lipidation sites follow: C257 and C258.

It belongs to the small GTPase superfamily. Rab family. As to quaternary structure, interacts with RILP. The GTP-bound form interacts with REP15. Requires Mg(2+) as cofactor.

It is found in the cytoplasm. The protein localises to the golgi apparatus. It localises to the cytoplasmic vesicle. Its subcellular location is the phagosome. The protein resides in the phagosome membrane. It is found in the cell projection. The protein localises to the cilium. It localises to the cytoskeleton. Its subcellular location is the microtubule organizing center. The protein resides in the centrosome. It is found in the centriole. The catalysed reaction is GTP + H2O = GDP + phosphate + H(+). Its activity is regulated as follows. Regulated by guanine nucleotide exchange factors (GEFs) which promote the exchange of bound GDP for free GTP. Regulated by GTPase activating proteins (GAPs) which increase the GTP hydrolysis activity. Inhibited by GDP dissociation inhibitors (GDIs). The small GTPases Rab are key regulators of intracellular membrane trafficking, from the formation of transport vesicles to their fusion with membranes. Rabs cycle between an inactive GDP-bound form and an active GTP-bound form that is able to recruit to membranes different sets of downstream effectors directly responsible for vesicle formation, movement, tethering and fusion. RAB34 transports protein involved in the redistribution of lysosomes to the peri-Golgi region. Plays a role in the maturation of phagosomes that engulf pathogens, such as S.aureus and M.tuberculosis. Plays a role in the fusion of phagosomes with lysosomes. Involved in ciliogenesis. In particular, it is required for early steps of the intracellular cilium assembly pathway initiated by trafficking and docking of ciliary vesicles to the centrioles in the cytoplasm, followed by axoneme formation in the cytoplasm. After axoneme elongation, the centrioles migrate close to the cell surface so that ciliary vesicles can fuse with the plasma membrane to expose cilia to the extracellular space. It seems dispensable for ciliogenesis via the extracellular pathway where cilium assembly begins after migration and docking of the centriole to the plasma membrane. Also acts as a positive regulator of hedgehog signaling and regulates ciliary function. The sequence is that of Ras-related protein Rab-34 from Homo sapiens (Human).